We begin with the raw amino-acid sequence, 761 residues long: Ribonucleoside-diphosphate reductase 1 subunit alpha (761 aa).

The region spanning 5–95 (LLVTKRDGST…IFHLRKKAYG (91 aa)) is the ATP-cone domain. ATP is bound by residues Lys9, 15–21 (ERINLDK), Thr55, and Lys91. Residue Thr209 coordinates GDP. A disulfide bond links Cys225 and Cys462. DTTP contacts are provided by residues 232-234 (DSL), Arg262, and Arg269. At Lys283 the chain carries N6-acetyllysine. Asn437 contacts GDP. Asn437 functions as the Proton acceptor in the catalytic mechanism. The active-site Cysteine radical intermediate is the Cys439. GDP contacts are provided by residues Glu441 and 623–625 (ETS). Residue Glu441 is the Proton acceptor of the active site.

It belongs to the ribonucleoside diphosphate reductase large chain family. In terms of assembly, tetramer of two alpha (R1) and two beta (R2) subunits. The B1 protein is a dimer of alpha subunits. A radical transfer pathway occurs between 'Tyr-122' of R2 and R1. Post-translationally, binding of the substrate occurs primarily when the active-site cysteines are reduced.

The enzyme catalyses a 2'-deoxyribonucleoside 5'-diphosphate + [thioredoxin]-disulfide + H2O = a ribonucleoside 5'-diphosphate + [thioredoxin]-dithiol. Its activity is regulated as follows. Under complex allosteric control mediated by deoxynucleoside triphosphates and ATP binding to separate specificity and activation sites on the alpha subunit. The type of nucleotide bound at the specificity site determines substrate preference. It seems probable that ATP makes the enzyme reduce CDP and UDP, dGTP favors ADP reduction and dTTP favors GDP reduction. Stimulated by ATP and inhibited by dATP binding to the activity site. In vitro, its activity is increased by dithiothreitol (DTT) or thioredoxins (non-specific). Inhibited by hydroxyurea, leads to dNTP depletion, replication fork arrest and genomic instability. Its function is as follows. Provides the precursors necessary for DNA synthesis. Catalyzes the biosynthesis of deoxyribonucleotides from the corresponding ribonucleotides. R1 contains the binding sites for both substrates and allosteric effectors and carries out the actual reduction of the ribonucleotide. It also provides redox-active cysteines. The sequence is that of Ribonucleoside-diphosphate reductase 1 subunit alpha (nrdA) from Escherichia coli (strain K12).